The sequence spans 268 residues: Energy-coupling factor transporter transmembrane protein EcfT (268 aa).

Transmembrane regions (helical) follow at residues 28–48 (FVFL…YLWV), 63–83 (LWFL…TLMM), 107–127 (ILEG…ATIM), 152–172 (LPVH…PTLM), and 248–268 (ISLT…YSGV).

The protein belongs to the energy-coupling factor EcfT family. As to quaternary structure, forms a stable energy-coupling factor (ECF) transporter complex composed of 2 membrane-embedded substrate-binding proteins (S component), 2 ATP-binding proteins (A component) and 2 transmembrane proteins (T component). May be able to interact with more than 1 S component at a time.

It is found in the cell membrane. Functionally, transmembrane (T) component of an energy-coupling factor (ECF) ABC-transporter complex. Unlike classic ABC transporters this ECF transporter provides the energy necessary to transport a number of different substrates. This Staphylococcus aureus (strain 04-02981) protein is Energy-coupling factor transporter transmembrane protein EcfT.